The primary structure comprises 340 residues: GTPase Obg (340 aa).

The Obg domain occupies 1–158 (MSFIDEAKIY…KHIILKLKII (158 aa)). In terms of domain architecture, OBG-type G spans 159 to 325 (SDVGIIGLPN…LSTLIKQIHK (167 aa)). GTP is bound by residues 165–172 (GLPNAGKS), 190–194 (FTTLE), 211–214 (DIPG), 278–281 (NKSD), and 306–308 (SSI). Mg(2+) is bound by residues S172 and T192.

The protein belongs to the TRAFAC class OBG-HflX-like GTPase superfamily. OBG GTPase family. Monomer. Requires Mg(2+) as cofactor.

It is found in the cytoplasm. An essential GTPase which binds GTP, GDP and possibly (p)ppGpp with moderate affinity, with high nucleotide exchange rates and a fairly low GTP hydrolysis rate. Plays a role in control of the cell cycle, stress response, ribosome biogenesis and in those bacteria that undergo differentiation, in morphogenesis control. The polypeptide is GTPase Obg (Ehrlichia canis (strain Jake)).